A 577-amino-acid chain; its full sequence is Arginine--tRNA ligase (577 aa).

The short motif at 122–132 is the 'HIGH' region element; it reads PNVAKEMHVGH.

Belongs to the class-I aminoacyl-tRNA synthetase family. Monomer.

The protein resides in the cytoplasm. It catalyses the reaction tRNA(Arg) + L-arginine + ATP = L-arginyl-tRNA(Arg) + AMP + diphosphate. The protein is Arginine--tRNA ligase of Escherichia coli O7:K1 (strain IAI39 / ExPEC).